Here is a 40-residue protein sequence, read N- to C-terminus: Competence and sporulation stimulating factor (40 aa).

Positions 1–35 (MKLKSKLFVICLAAAAIFTAAGVSANAEALDFHVT) are excised as a propeptide.

This sequence belongs to the Phr family. In terms of assembly, interacts with RapC and inhibits its interaction with ComA. Post-translationally, secreted with a propeptide domain, which is cleaved in the cell wall by the secreted serine proteases subtilisin, Epr and Vpr to produce a mature signaling peptide. Contains a predicted signal peptide cleavage site in the N-terminal region, however the propeptide is probably subject to only one processing event, at the N-terminal end of the mature peptide.

It is found in the secreted. The protein localises to the cytoplasm. Its subcellular location is the host cell. Functionally, signaling molecule that serves as a cell density signal for both genetic competence development and sporulation. Secreted during production, but the mature peptide acts intracellularly, indicating that it needs to be imported into the cell to function. At low concentrations, CSF stimulates expression of the genes controlled by ComA, a transcriptional factor that regulates the development of genetic competence. It includes the srfA operon, which encodes a small protein, ComS, required for competence development, and the surfactin biosynthetic enzymes. Acts by inhibiting RapC, which regulates the activity of ComA. At high concentrations, it inhibits expression of those same ComA-controlled genes, maybe by inhibiting activity of the kinase ComP. In addition, high concentrations of CSF can stimulate sporulation under some conditions. Also inhibits RapB activity, with lower efficiency, but does not act on RapA. Is probably involved in the quorum sensing control of sporulation. CSF is a species-specific signaling molecule that partially compensates for the lack of ComX-mediated communication between different strains of B.subtilis. In terms of biological role, b.subtilis is a well-characterized soil and water saprophyte, but it is also found in enteric flora of many species, including humans. In this environment, CSF can be transported into human intestinal epithelia via OCTN2, a host cell membrane transporter, and can induce cytoprotective heat shock proteins contributing to intestinal homeostasis. Its function is as follows. In addition, in non-domesticated swarming strains of B.subtilis, the residual propeptide exposed on the exterior of the cytoplasmic membrane may have an extracellular role in swarming. This function is probably not dependent on CSF. This Bacillus subtilis (strain 168) protein is Competence and sporulation stimulating factor.